The sequence spans 345 residues: UDP-3-O-acylglucosamine N-acyltransferase (345 aa).

The Proton acceptor role is filled by H248.

Belongs to the transferase hexapeptide repeat family. LpxD subfamily. As to quaternary structure, homotrimer.

The enzyme catalyses a UDP-3-O-[(3R)-3-hydroxyacyl]-alpha-D-glucosamine + a (3R)-hydroxyacyl-[ACP] = a UDP-2-N,3-O-bis[(3R)-3-hydroxyacyl]-alpha-D-glucosamine + holo-[ACP] + H(+). Its pathway is bacterial outer membrane biogenesis; LPS lipid A biosynthesis. Catalyzes the N-acylation of UDP-3-O-acylglucosamine using 3-hydroxyacyl-ACP as the acyl donor. Is involved in the biosynthesis of lipid A, a phosphorylated glycolipid that anchors the lipopolysaccharide to the outer membrane of the cell. The chain is UDP-3-O-acylglucosamine N-acyltransferase from Prochlorococcus marinus (strain SARG / CCMP1375 / SS120).